The sequence spans 389 residues: 26S proteasome non-ATPase regulatory subunit 6 (389 aa).

Residues 193–361 (NFKKAASLFL…CVLETNRPDA (169 aa)) enclose the PCI domain.

The protein belongs to the proteasome subunit S10 family.

Functionally, acts as a regulatory subunit of the 26S proteasome which is involved in the ATP-dependent degradation of ubiquitinated proteins. The chain is 26S proteasome non-ATPase regulatory subunit 6 (RPN7) from Oryza sativa subsp. japonica (Rice).